Reading from the N-terminus, the 273-residue chain is Embryonic polyadenylate-binding protein 2 (273 aa).

The interval 22-57 is disordered; that stretch reads SSDPEAQGWGAWGRTEKTSLVPRAGSRAGSDKEAEE. Residues 143–220 enclose the RRM domain; sequence RSVFVGNVDY…RVIKVLPKRT (78 aa).

The protein localises to the cytoplasm. Binds the poly(A) tail of mRNA. The polypeptide is Embryonic polyadenylate-binding protein 2 (Pabpn1l) (Mus musculus (Mouse)).